A 173-amino-acid chain; its full sequence is Flavodoxin (173 aa).

The Flavodoxin-like domain occupies 2 to 168; the sequence is IGIFFSTSTG…RVAGWVEAVV (167 aa).

This sequence belongs to the flavodoxin family. Requires FMN as cofactor.

Low-potential electron donor to a number of redox enzymes. The chain is Flavodoxin from Chondrus crispus (Carrageen Irish moss).